Here is a 338-residue protein sequence, read N- to C-terminus: Lipoate-protein ligase A (338 aa).

The region spanning 29–216 is the BPL/LPL catalytic domain; that stretch reads PATQRVLFLW…AFFAHYGERI (188 aa). Residues R71, 76–79, and K134 each bind ATP; that span reads GAVF. K134 serves as a coordination point for (R)-lipoate.

It belongs to the LplA family. Monomer.

It is found in the cytoplasm. It catalyses the reaction L-lysyl-[lipoyl-carrier protein] + (R)-lipoate + ATP = N(6)-[(R)-lipoyl]-L-lysyl-[lipoyl-carrier protein] + AMP + diphosphate + H(+). It functions in the pathway protein modification; protein lipoylation via exogenous pathway; protein N(6)-(lipoyl)lysine from lipoate: step 1/2. The protein operates within protein modification; protein lipoylation via exogenous pathway; protein N(6)-(lipoyl)lysine from lipoate: step 2/2. Catalyzes both the ATP-dependent activation of exogenously supplied lipoate to lipoyl-AMP and the transfer of the activated lipoyl onto the lipoyl domains of lipoate-dependent enzymes. This Salmonella paratyphi A (strain ATCC 9150 / SARB42) protein is Lipoate-protein ligase A.